The following is a 183-amino-acid chain: ATP-dependent protease subunit HslV (183 aa).

T2 is a catalytic residue. Na(+)-binding residues include G157, C160, and T163.

It belongs to the peptidase T1B family. HslV subfamily. As to quaternary structure, a double ring-shaped homohexamer of HslV is capped on each side by a ring-shaped HslU homohexamer. The assembly of the HslU/HslV complex is dependent on binding of ATP.

Its subcellular location is the cytoplasm. It carries out the reaction ATP-dependent cleavage of peptide bonds with broad specificity.. With respect to regulation, allosterically activated by HslU binding. Protease subunit of a proteasome-like degradation complex believed to be a general protein degrading machinery. This chain is ATP-dependent protease subunit HslV, found in Vibrio campbellii (strain ATCC BAA-1116).